The primary structure comprises 28 residues: Gamma-conotoxin-like de7a (28 aa).

Cystine bridges form between Cys2-Cys18, Cys9-Cys22, and Cys17-Cys27. Pro4 carries the 4-hydroxyproline modification. 4-carboxyglutamate occurs at positions 13 and 16. Residue Ser28 is modified to Serine amide.

This sequence belongs to the conotoxin O1 superfamily. Expressed by the venom duct.

Its subcellular location is the secreted. Its function is as follows. Gamma-conotoxins may act on voltage-gated non-specific cation pacemaker channels (HCN). This is Gamma-conotoxin-like de7a from Conasprella delessertii (Sozon's cone).